A 395-amino-acid polypeptide reads, in one-letter code: MAKEKFDRSKPHVNIGTIGHVDHGKTTLTAAITTVLAKKGYADAQAYDQIDGAPEERERGITISTAHVEYQTDSRHYAHVDCPGHADYVKNMITGAAQMDGAILVVSAADGPMPQTREHILLSRQVGVPYIVVFMNKCDMVDDEELLELVEMEIRDLLTEYEFPGDDIPVIKGSALKALQGEADWEAKIDELMEAVDSYIPTPERDTDKPFMMPVEDVFSITGRGTVATGRVERGQVKVGDEVEVIGIEEESKKVVVTGVEMFRKLLDYAEAGDNIGALLRGVAREDIQRGQVLAKPGSITPHTNFKAETYVLTKEEGGRHTPFFNNYRPQFYFRTTDVTGIVTLPEGTEMVMPGDNIELAVELIAPIAIEDGTKFSIREGGRTVGAGVVSNISK.

The tr-type G domain maps to 10–204; it reads KPHVNIGTIG…AVDSYIPTPE (195 aa). Positions 19-26 are G1; that stretch reads GHVDHGKT. Position 19 to 26 (19 to 26) interacts with GTP; the sequence is GHVDHGKT. Thr26 is a Mg(2+) binding site. The interval 60–64 is G2; that stretch reads GITIS. The segment at 81 to 84 is G3; the sequence is DCPG. GTP contacts are provided by residues 81–85 and 136–139; these read DCPGH and NKCD. Residues 136 to 139 form a G4 region; sequence NKCD. A G5 region spans residues 174–176; the sequence is SAL.

The protein belongs to the TRAFAC class translation factor GTPase superfamily. Classic translation factor GTPase family. EF-Tu/EF-1A subfamily. As to quaternary structure, monomer.

Its subcellular location is the cytoplasm. The enzyme catalyses GTP + H2O = GDP + phosphate + H(+). In terms of biological role, GTP hydrolase that promotes the GTP-dependent binding of aminoacyl-tRNA to the A-site of ribosomes during protein biosynthesis. This chain is Elongation factor Tu, found in Listeria monocytogenes serotype 4b (strain CLIP80459).